The primary structure comprises 375 residues: Eukaryotic translation initiation factor 3 subunit F (375 aa).

The MPN domain maps to 30–166 (VVIQPQALFS…TRAYISAPVG (137 aa)). The tract at residues 307–375 (LGGESGSGES…EAQNGKEEKK (69 aa)) is disordered. The span at 323 to 332 (QRGGKGGRGG) shows a compositional bias: gly residues. Basic and acidic residues-rich tracts occupy residues 336-345 (TQERSGEEAR) and 358-375 (RSYEERTNEAQNGKEEKK).

This sequence belongs to the eIF-3 subunit F family. In terms of assembly, component of the eukaryotic translation initiation factor 3 (eIF-3) complex.

Its subcellular location is the cytoplasm. Component of the eukaryotic translation initiation factor 3 (eIF-3) complex, which is involved in protein synthesis of a specialized repertoire of mRNAs and, together with other initiation factors, stimulates binding of mRNA and methionyl-tRNAi to the 40S ribosome. The eIF-3 complex specifically targets and initiates translation of a subset of mRNAs involved in cell proliferation. This Aspergillus niger (strain ATCC MYA-4892 / CBS 513.88 / FGSC A1513) protein is Eukaryotic translation initiation factor 3 subunit F.